Reading from the N-terminus, the 277-residue chain is Indole-3-glycerol phosphate synthase (277 aa).

This sequence belongs to the TrpC family.

The enzyme catalyses 1-(2-carboxyphenylamino)-1-deoxy-D-ribulose 5-phosphate + H(+) = (1S,2R)-1-C-(indol-3-yl)glycerol 3-phosphate + CO2 + H2O. The protein operates within amino-acid biosynthesis; L-tryptophan biosynthesis; L-tryptophan from chorismate: step 4/5. This is Indole-3-glycerol phosphate synthase from Pseudomonas putida (strain W619).